Here is a 582-residue protein sequence, read N- to C-terminus: ATP-dependent lipid A-core flippase (582 aa).

Helical transmembrane passes span 16–36 (LWPT…ALIL), 63–83 (VLVW…ITSY), 153–173 (IIGL…ILIV), 253–273 (PIIQ…ASFP), and 275–295 (VMDN…IALM). The 283-residue stretch at 28 to 310 (IVAGVALILN…LTNVNAQFQR (283 aa)) folds into the ABC transmembrane type-1 domain. Positions 342 to 578 (VEFRNVTFTY…RGVYAQLHKM (237 aa)) constitute an ABC transporter domain. 376-383 (GRSGSGKS) is an ATP binding site.

This sequence belongs to the ABC transporter superfamily. Lipid exporter (TC 3.A.1.106) family. As to quaternary structure, homodimer.

The protein resides in the cell inner membrane. It catalyses the reaction ATP + H2O + lipid A-core oligosaccharideSide 1 = ADP + phosphate + lipid A-core oligosaccharideSide 2.. In terms of biological role, involved in lipopolysaccharide (LPS) biosynthesis. Translocates lipid A-core from the inner to the outer leaflet of the inner membrane. Transmembrane domains (TMD) form a pore in the inner membrane and the ATP-binding domain (NBD) is responsible for energy generation. The polypeptide is ATP-dependent lipid A-core flippase (Shigella sonnei (strain Ss046)).